A 290-amino-acid polypeptide reads, in one-letter code: MDKIIKSIAQSGAFRAYVLDSTETVALAQEKHNTLSSSTVALGRTLIANQILAANQKGDSKITVKVIGDSSFGHIISVADTKGHVKGYIQNTGVDIKKTATGEVLVGPFMGNGHFVTIIDYGTGNPYTSTTPLITGEIGEDFAYYLTESEQTPSAIGLNVLLDENDKVKVAGGFMVQVLPGASEEEIARYEKRLQEMPAISHLLASKNHVDALLEAIYGDEPYKRLSEEPLSFQCDCSRERFEAALMTLPKADLQAMIDEDKGAEIVCQFCGTKYQFNESDLEALINDKA.

Cystine bridges form between Cys235–Cys237 and Cys268–Cys271.

The protein belongs to the HSP33 family. Post-translationally, under oxidizing conditions two disulfide bonds are formed involving the reactive cysteines. Under reducing conditions zinc is bound to the reactive cysteines and the protein is inactive.

It is found in the cytoplasm. Redox regulated molecular chaperone. Protects both thermally unfolding and oxidatively damaged proteins from irreversible aggregation. Plays an important role in the bacterial defense system toward oxidative stress. The polypeptide is 33 kDa chaperonin (Streptococcus pyogenes serotype M18 (strain MGAS8232)).